A 281-amino-acid polypeptide reads, in one-letter code: DSC E3 ubiquitin ligase complex subunit 4 (281 aa).

4 helical membrane passes run L22–L42, L62–F82, L84–I104, and F115–A135. Residues H145–S154 show a composition bias toward polar residues. 2 disordered regions span residues H145 to Q183 and N256 to I281. The segment covering D157–T167 has biased composition (acidic residues). The segment covering E168–Q183 has biased composition (basic and acidic residues).

In terms of assembly, component of the DSC E3 ubiquitin ligase complex composed of dsc1, dsc2, dsc3 and dsc4.

It is found in the endoplasmic reticulum membrane. The protein localises to the golgi apparatus membrane. Its pathway is protein modification; protein ubiquitination. Its function is as follows. Component of the DSC E3 ubiquitin ligase complex which is required for the sre1 transcriptional activator proteolytic cleavage to release the soluble transcription factor from the membrane in low oxygen or sterol conditions. The complex also plays an important role in the multivesicular body (MVB) pathway and functions in a post-endoplasmic reticulum pathway for protein degradation. This Schizosaccharomyces pombe (strain 972 / ATCC 24843) (Fission yeast) protein is DSC E3 ubiquitin ligase complex subunit 4 (dsc4).